Here is a 361-residue protein sequence, read N- to C-terminus: KDEL-tailed cysteine endopeptidase CEP2 (361 aa).

The N-terminal stretch at 1–20 (MKKLLLIFLFSLVILQTACG) is a signal peptide. Residues 21 to 127 (FDYDDKEIES…FMYDHENLSK (107 aa)) constitute a propeptide, activation peptide. N-linked (GlcNAc...) asparagine glycosylation is found at asparagine 75 and asparagine 124. Cystine bridges form between cysteine 149–cysteine 191, cysteine 183–cysteine 224, and cysteine 282–cysteine 333. The active site involves cysteine 152. Active-site residues include histidine 288 and asparagine 308. Residues 358 to 361 (KDEL) carry the Prevents secretion from ER motif.

The protein belongs to the peptidase C1 family. As to expression, expressed in roots, stems, rosette and cauline leaves, flowers, buds and green siliques. Found in the tip of young primary leaves, in very young root tips and at later stages in all tissues of lateral root, including the vascular bundle. Not expressed in lateral root primordia, while directly emerging through the epidermis.

It localises to the endoplasmic reticulum. Its function is as follows. Involved in the final stage of developmental programmed cell death and in intercalation of new cells. Cleaves extensins, thus probably supporting the final cell collapse. In Arabidopsis thaliana (Mouse-ear cress), this protein is KDEL-tailed cysteine endopeptidase CEP2.